Consider the following 446-residue polypeptide: NADH oxidase (446 aa).

FAD is bound by residues glycine 7–alanine 11, glutamate 32, cysteine 42, valine 79, threonine 110–serine 113, lysine 132, and tyrosine 157. Histidine 10 (proton acceptor) is an active-site residue. The active-site Redox-active is the cysteine 42. Cysteine sulfinic acid (-SO2H) is present on cysteine 42. NAD(+)-binding positions include valine 150–alanine 165, aspartate 177, tyrosine 186, and glycine 243. FAD is bound by residues threonine 271–aspartate 281, leucine 298, alanine 299, and threonine 300. Position 328 (glycine 328) interacts with NAD(+). Phenylalanine 424 lines the FAD pocket.

It belongs to the class-III pyridine nucleotide-disulfide oxidoreductase family. As to quaternary structure, homodimer. It depends on FAD as a cofactor. The N-terminus is blocked.

The catalysed reaction is 2 NADH + O2 + 2 H(+) = 2 NAD(+) + 2 H2O. In terms of biological role, catalyzes the four-electron reduction of molecular oxygen to water. The protein is NADH oxidase (nox) of Enterococcus faecalis (strain ATCC 700802 / V583).